A 625-amino-acid chain; its full sequence is RalA-binding protein 1 (625 aa).

2 stretches are compositionally biased toward basic and acidic residues: residues methionine 1–phenylalanine 11 and alanine 20–glycine 60. The interval methionine 1–aspartate 172 is disordered. Phosphoserine is present on residues serine 68 and serine 69. Over residues lysine 94–aspartate 157 the composition is skewed to basic and acidic residues. In terms of domain architecture, Rho-GAP spans valine 191–proline 385. The interval glutamine 443–aspartate 500 is disordered. Over residues alanine 475–glutamine 484 the composition is skewed to polar residues.

Interacts with CycB and numb.

Functionally, participates in receptor endocytosis during interphase, is also involved in mitotic processes when endocytosis is switched off. This Drosophila melanogaster (Fruit fly) protein is RalA-binding protein 1.